The following is a 147-amino-acid chain: Large ribosomal subunit protein uL13 (147 aa).

The protein belongs to the universal ribosomal protein uL13 family. As to quaternary structure, part of the 50S ribosomal subunit.

Functionally, this protein is one of the early assembly proteins of the 50S ribosomal subunit, although it is not seen to bind rRNA by itself. It is important during the early stages of 50S assembly. The sequence is that of Large ribosomal subunit protein uL13 from Lactobacillus johnsonii (strain CNCM I-12250 / La1 / NCC 533).